Here is a 625-residue protein sequence, read N- to C-terminus: Phosphomethylpyrimidine synthase (625 aa).

Residues Asn-230, Met-259, Tyr-288, His-324, 344-346, 385-388, and Glu-424 each bind substrate; these read SRG and DGLR. His-428 contacts Zn(2+). Tyr-451 contacts substrate. Zn(2+) is bound at residue His-492. Residues Cys-572, Cys-575, and Cys-580 each coordinate [4Fe-4S] cluster.

It belongs to the ThiC family. In terms of assembly, homodimer. [4Fe-4S] cluster is required as a cofactor.

The enzyme catalyses 5-amino-1-(5-phospho-beta-D-ribosyl)imidazole + S-adenosyl-L-methionine = 4-amino-2-methyl-5-(phosphooxymethyl)pyrimidine + CO + 5'-deoxyadenosine + formate + L-methionine + 3 H(+). It participates in cofactor biosynthesis; thiamine diphosphate biosynthesis. Its function is as follows. Catalyzes the synthesis of the hydroxymethylpyrimidine phosphate (HMP-P) moiety of thiamine from aminoimidazole ribotide (AIR) in a radical S-adenosyl-L-methionine (SAM)-dependent reaction. The chain is Phosphomethylpyrimidine synthase from Xanthomonas campestris pv. campestris (strain 8004).